A 443-amino-acid chain; its full sequence is Trigger factor (443 aa).

A PPIase FKBP-type domain is found at 165-250 (GDQIVMDFLG…VKEVKKPVPA (86 aa)).

Belongs to the FKBP-type PPIase family. Tig subfamily.

The protein localises to the cytoplasm. The enzyme catalyses [protein]-peptidylproline (omega=180) = [protein]-peptidylproline (omega=0). Its function is as follows. Involved in protein export. Acts as a chaperone by maintaining the newly synthesized protein in an open conformation. Functions as a peptidyl-prolyl cis-trans isomerase. This chain is Trigger factor, found in Roseobacter denitrificans (strain ATCC 33942 / OCh 114) (Erythrobacter sp. (strain OCh 114)).